We begin with the raw amino-acid sequence, 209 residues long: Putative thymidylate synthase (209 aa).

Cys-137 is a catalytic residue.

It belongs to the thymidylate synthase family. Archaeal-type ThyA subfamily. In terms of assembly, monomer.

It localises to the cytoplasm. The protein operates within pyrimidine metabolism; dTTP biosynthesis. In terms of biological role, may catalyze the biosynthesis of dTMP using an unknown cosubstrate. The sequence is that of Putative thymidylate synthase from Methanopyrus kandleri (strain AV19 / DSM 6324 / JCM 9639 / NBRC 100938).